A 1704-amino-acid chain; its full sequence is Arf-GAP with Rho-GAP domain, ANK repeat and PH domain-containing protein 2 (1704 aa).

The SAM domain occupies Glu6 to Lys70. The residue at position 77 (Tyr77) is a Phosphotyrosine. The interval Asn126–Leu161 is disordered. Positions Ser142–His160 are enriched in basic and acidic residues. PH domains are found at residues Lys482 to Lys574 and Thr587 to Ala679. The Arf-GAP domain occupies Gln676–Glu811. The segment at Cys700–Cys723 adopts a C4-type zinc-finger fold. 2 consecutive PH domains span residues Asp878–Val1003 and Asp1014–Asp1114. A Rho-GAP domain is found at Asn1116–Phe1297. The region spanning Gly1326–Thr1420 is the Ras-associating domain. The region spanning Gly1434–His1537 is the PH 5 domain. The residue at position 1632 (Ser1632) is a Phosphoserine. The interval Leu1636–Leu1675 is disordered. Positions Arg1658–Leu1675 are enriched in basic and acidic residues.

Detected in brain, thymus, lymph node, thyroid, spinal cord, trachea, heart, skeletal muscle, spleen, kidney, liver, placenta, lung and peripheral blood leukocytes.

The protein resides in the cytoplasm. Functionally, phosphatidylinositol 3,4,5-trisphosphate-dependent GTPase-activating protein that modulates actin cytoskeleton remodeling by regulating ARF and RHO family members. Is activated by phosphatidylinositol 3,4,5-trisphosphate (PtdIns(3,4,5)P3) binding. Can be activated by phosphatidylinositol 3,4-bisphosphate (PtdIns(3,4,5)P2) binding, albeit with lower efficiency. This Homo sapiens (Human) protein is Arf-GAP with Rho-GAP domain, ANK repeat and PH domain-containing protein 2 (ARAP2).